The primary structure comprises 404 residues: uncharacterized protein (404 aa).

This is an uncharacterized protein from Alcelaphine herpesvirus 1 (strain C500) (AlHV-1).